The chain runs to 181 residues: Protein GrpE (181 aa).

This sequence belongs to the GrpE family. In terms of assembly, homodimer.

The protein resides in the cytoplasm. In terms of biological role, participates actively in the response to hyperosmotic and heat shock by preventing the aggregation of stress-denatured proteins, in association with DnaK and GrpE. It is the nucleotide exchange factor for DnaK and may function as a thermosensor. Unfolded proteins bind initially to DnaJ; upon interaction with the DnaJ-bound protein, DnaK hydrolyzes its bound ATP, resulting in the formation of a stable complex. GrpE releases ADP from DnaK; ATP binding to DnaK triggers the release of the substrate protein, thus completing the reaction cycle. Several rounds of ATP-dependent interactions between DnaJ, DnaK and GrpE are required for fully efficient folding. The sequence is that of Protein GrpE from Delftia acidovorans (strain DSM 14801 / SPH-1).